A 183-amino-acid polypeptide reads, in one-letter code: Glutathione-regulated potassium-efflux system ancillary protein KefG (183 aa).

Belongs to the NAD(P)H dehydrogenase (quinone) family. KefG subfamily. Interacts with KefB.

The protein resides in the cell inner membrane. It carries out the reaction a quinone + NADH + H(+) = a quinol + NAD(+). The catalysed reaction is a quinone + NADPH + H(+) = a quinol + NADP(+). Functionally, regulatory subunit of a potassium efflux system that confers protection against electrophiles. Required for full activity of KefB. This is Glutathione-regulated potassium-efflux system ancillary protein KefG from Salmonella paratyphi B (strain ATCC BAA-1250 / SPB7).